The following is a 216-amino-acid chain: Probable GTP-binding protein EngB (216 aa).

Positions 21–192 constitute an EngB-type G domain; that stretch reads DAPQIALAGR…WRELRALAAG (172 aa). GTP contacts are provided by residues 29–36, 56–60, 75–78, 142–145, and 170–173; these read GRSNVGKS, GKTRS, DLPG, TKGD, and VTAS. The Mg(2+) site is built by S36 and T58. The tract at residues 195-216 is disordered; the sequence is SADDEAEDAPSDTIDAIDDVTA. Acidic residues predominate over residues 196–216; the sequence is ADDEAEDAPSDTIDAIDDVTA.

This sequence belongs to the TRAFAC class TrmE-Era-EngA-EngB-Septin-like GTPase superfamily. EngB GTPase family. Mg(2+) is required as a cofactor.

Its function is as follows. Necessary for normal cell division and for the maintenance of normal septation. This is Probable GTP-binding protein EngB from Nitratidesulfovibrio vulgaris (strain DP4) (Desulfovibrio vulgaris).